Here is a 123-residue protein sequence, read N- to C-terminus: Small ribosomal subunit protein uS12 (123 aa).

At Asp89 the chain carries 3-methylthioaspartic acid.

This sequence belongs to the universal ribosomal protein uS12 family. As to quaternary structure, part of the 30S ribosomal subunit. Contacts proteins S8 and S17. May interact with IF1 in the 30S initiation complex.

Functionally, with S4 and S5 plays an important role in translational accuracy. Its function is as follows. Interacts with and stabilizes bases of the 16S rRNA that are involved in tRNA selection in the A site and with the mRNA backbone. Located at the interface of the 30S and 50S subunits, it traverses the body of the 30S subunit contacting proteins on the other side and probably holding the rRNA structure together. The combined cluster of proteins S8, S12 and S17 appears to hold together the shoulder and platform of the 30S subunit. This Brucella anthropi (strain ATCC 49188 / DSM 6882 / CCUG 24695 / JCM 21032 / LMG 3331 / NBRC 15819 / NCTC 12168 / Alc 37) (Ochrobactrum anthropi) protein is Small ribosomal subunit protein uS12.